The primary structure comprises 322 residues: MLKIQDFEFVKVVGVGAFGKVHLVRLKSSPTSVFAMKMLDFGEILRQRLADQLENEISILKRIYGCPFVAKLYSTDFHGGKVGLIMEYVGGGELFYWLKKCGRFDEQMARFYAAEIISALRFIHGRGILYRDLKPENILITSTGHIKLIDFGFSVYESENIYMISGTPEYMSPEKLRSEDDGRASDYWGLGVMIYEMLCGDPPFYDSSADAIYHKILESNVVFPHYVSPVARCLITGLLDKNRATRLGTKGICEIMGHPFFKGIDWHEVESRRIEPPFIPNPNTVLSSLASSGELKGTDDAETVVLKPYKHIKHLYKVSKGL.

Positions 7–261 constitute a Protein kinase domain; sequence FEFVKVVGVG…ICEIMGHPFF (255 aa). ATP-binding positions include 13–21 and lysine 37; that span reads VGVGAFGKV. Aspartate 132 serves as the catalytic Proton acceptor. Positions 262-322 constitute an AGC-kinase C-terminal domain; it reads KGIDWHEVES…KHLYKVSKGL (61 aa).

Belongs to the protein kinase superfamily. AGC Ser/Thr protein kinase family. cAMP subfamily.

It catalyses the reaction L-seryl-[protein] + ATP = O-phospho-L-seryl-[protein] + ADP + H(+). The enzyme catalyses L-threonyl-[protein] + ATP = O-phospho-L-threonyl-[protein] + ADP + H(+). This chain is Probable cAMP-dependent protein kinase catalytic subunit, found in Encephalitozoon cuniculi (strain GB-M1) (Microsporidian parasite).